A 166-amino-acid polypeptide reads, in one-letter code: Ureidoglycolate lyase (166 aa).

Belongs to the ureidoglycolate lyase family. As to quaternary structure, homodimer. Ni(2+) is required as a cofactor.

It carries out the reaction (S)-ureidoglycolate = urea + glyoxylate. The protein operates within nitrogen metabolism; (S)-allantoin degradation. In terms of biological role, catalyzes the catabolism of the allantoin degradation intermediate (S)-ureidoglycolate, generating urea and glyoxylate. Involved in the utilization of allantoin as nitrogen source. This Azotobacter vinelandii (strain DJ / ATCC BAA-1303) protein is Ureidoglycolate lyase.